The following is a 149-amino-acid chain: Hydrogenase expression/formation protein HupT (149 aa).

Belongs to the HupJ family.

The chain is Hydrogenase expression/formation protein HupT (hupT) from Azotobacter chroococcum mcd 1.